Reading from the N-terminus, the 234-residue chain is Large ribosomal subunit protein uL1 (234 aa).

Belongs to the universal ribosomal protein uL1 family. Part of the 50S ribosomal subunit.

In terms of biological role, binds directly to 23S rRNA. The L1 stalk is quite mobile in the ribosome, and is involved in E site tRNA release. Protein L1 is also a translational repressor protein, it controls the translation of the L11 operon by binding to its mRNA. This chain is Large ribosomal subunit protein uL1, found in Sodalis glossinidius (strain morsitans).